The chain runs to 276 residues: Diaminopimelate epimerase (276 aa).

Substrate-binding residues include Asn-13, Gln-46, and Asn-66. The active-site Proton donor is Cys-75. Substrate-binding positions include 76–77, Asn-159, Asn-192, and 210–211; these read GN and ER. Cys-219 acts as the Proton acceptor in catalysis. 220-221 serves as a coordination point for substrate; the sequence is GT.

It belongs to the diaminopimelate epimerase family. Homodimer.

It localises to the cytoplasm. The enzyme catalyses (2S,6S)-2,6-diaminopimelate = meso-2,6-diaminopimelate. The protein operates within amino-acid biosynthesis; L-lysine biosynthesis via DAP pathway; DL-2,6-diaminopimelate from LL-2,6-diaminopimelate: step 1/1. Catalyzes the stereoinversion of LL-2,6-diaminopimelate (L,L-DAP) to meso-diaminopimelate (meso-DAP), a precursor of L-lysine and an essential component of the bacterial peptidoglycan. The chain is Diaminopimelate epimerase from Pseudomonas putida (strain GB-1).